Reading from the N-terminus, the 232-residue chain is 5'-methylthioadenosine/S-adenosylhomocysteine nucleosidase (232 aa).

The Proton acceptor role is filled by E14. Substrate contacts are provided by residues G80, V154, and 175-176 (ME). Catalysis depends on D199, which acts as the Proton donor.

This sequence belongs to the PNP/UDP phosphorylase family. MtnN subfamily.

It carries out the reaction S-adenosyl-L-homocysteine + H2O = S-(5-deoxy-D-ribos-5-yl)-L-homocysteine + adenine. The enzyme catalyses S-methyl-5'-thioadenosine + H2O = 5-(methylsulfanyl)-D-ribose + adenine. The catalysed reaction is 5'-deoxyadenosine + H2O = 5-deoxy-D-ribose + adenine. Its pathway is amino-acid biosynthesis; L-methionine biosynthesis via salvage pathway; S-methyl-5-thio-alpha-D-ribose 1-phosphate from S-methyl-5'-thioadenosine (hydrolase route): step 1/2. Functionally, catalyzes the irreversible cleavage of the glycosidic bond in both 5'-methylthioadenosine (MTA) and S-adenosylhomocysteine (SAH/AdoHcy) to adenine and the corresponding thioribose, 5'-methylthioribose and S-ribosylhomocysteine, respectively. Also cleaves 5'-deoxyadenosine, a toxic by-product of radical S-adenosylmethionine (SAM) enzymes, into 5-deoxyribose and adenine. In Haemophilus ducreyi (strain 35000HP / ATCC 700724), this protein is 5'-methylthioadenosine/S-adenosylhomocysteine nucleosidase.